The sequence spans 175 residues: Ribosome maturation factor RimM (175 aa).

The PRC barrel domain maps to 98-175 (EGEYYWHQLE…EMRVDWDADF (78 aa)).

The protein belongs to the RimM family. In terms of assembly, binds ribosomal protein uS19.

Its subcellular location is the cytoplasm. Functionally, an accessory protein needed during the final step in the assembly of 30S ribosomal subunit, possibly for assembly of the head region. Essential for efficient processing of 16S rRNA. May be needed both before and after RbfA during the maturation of 16S rRNA. It has affinity for free ribosomal 30S subunits but not for 70S ribosomes. The chain is Ribosome maturation factor RimM from Pseudomonas aeruginosa (strain UCBPP-PA14).